A 101-amino-acid polypeptide reads, in one-letter code: Small ribosomal subunit protein uS14 (101 aa).

The span at 1–10 (MAKKSSVEKN) shows a compositional bias: basic and acidic residues. Residues 1 to 23 (MAKKSSVEKNNRRKRMAKNAAPK) form a disordered region. Basic residues predominate over residues 11–23 (NRRKRMAKNAAPK).

It belongs to the universal ribosomal protein uS14 family. In terms of assembly, part of the 30S ribosomal subunit. Contacts proteins S3 and S10.

In terms of biological role, binds 16S rRNA, required for the assembly of 30S particles and may also be responsible for determining the conformation of the 16S rRNA at the A site. This chain is Small ribosomal subunit protein uS14, found in Bradyrhizobium sp. (strain BTAi1 / ATCC BAA-1182).